The sequence spans 1448 residues: ABC transporter G family member 9 (1448 aa).

Residues 16-28 (EGGSNLNINTPSG) show a composition bias toward polar residues. The tract at residues 16-41 (EGGSNLNINTPSGMSDGDFNSGANSP) is disordered. The ABC transporter 1 domain occupies 136–385 (LFKPSTWKIE…FLDLGFDCEP (250 aa)). The region spanning 490-717 (WGDKFSLVSR…APYDNSVRVC (228 aa)) is the ABC transmembrane type-2 1 domain. Helical transmembrane passes span 494–514 (FSLVSRYLSVIIQSFVYGSVF), 530–550 (AIFAAILFNAFLSEGELFATF), 579–599 (IPLTTVQVFLFSIVVYFMFGL), 604–624 (GKFFIFCFTLIGATLATTNMF), 634–654 (LYVSQNVMTGILIFMISYCGY), 663–683 (PWFGWFFWANPFTYAFKALMA), and 748–768 (LNIFITYLWWVLFIIINMVAV). The 245-residue stretch at 822–1066 (FTWENIKYTV…LTSYFERQGV (245 aa)) folds into the ABC transporter 2 domain. 858–865 (GSSGAGKT) is an ATP binding site. The next 6 helical transmembrane spans lie at 1157 to 1177 (FYAYGSILQAVMTGIIVGFTF), 1191 to 1211 (IFFIFQALLLGILLIFVVMVQ), 1233 to 1253 (FAISIVLVEIPYTIVCGSVFF), 1272 to 1292 (FYFWIIFIIYLFFCVSFGGAI), 1299 to 1319 (MFLAMTLVPLLIVFLFLFCGV), and 1422 to 1442 (IAILIAFWMFNIFLVVSFVYL). The 233-residue stretch at 1157-1389 (FYAYGSILQA…VPATGYVTNT (233 aa)) folds into the ABC transmembrane type-2 2 domain.

The protein belongs to the ABC transporter superfamily. ABCG family. PDR (TC 3.A.1.205) subfamily.

It localises to the membrane. This is ABC transporter G family member 9 (abcG9) from Dictyostelium discoideum (Social amoeba).